The primary structure comprises 661 residues: tRNA uridine 5-carboxymethylaminomethyl modification enzyme MnmG (661 aa).

FAD contacts are provided by residues 16-21 (GAGHAG), V128, and S183. The interval 206-230 (PRVNGNTIDYSKTEEEPGDKTPRHF) is disordered. Residues 216–230 (SKTEEEPGDKTPRHF) are compositionally biased toward basic and acidic residues. 277-291 (GPRYCPSIEDKVVRF) is an NAD(+) binding site. An FAD-binding site is contributed by Q374.

Belongs to the MnmG family. In terms of assembly, homodimer. Heterotetramer of two MnmE and two MnmG subunits. FAD is required as a cofactor.

Its subcellular location is the cytoplasm. Functionally, NAD-binding protein involved in the addition of a carboxymethylaminomethyl (cmnm) group at the wobble position (U34) of certain tRNAs, forming tRNA-cmnm(5)s(2)U34. The sequence is that of tRNA uridine 5-carboxymethylaminomethyl modification enzyme MnmG from Lactobacillus helveticus (strain DPC 4571).